The sequence spans 306 residues: Agmatinase (306 aa).

Histidine 126, aspartate 149, histidine 151, aspartate 153, aspartate 230, and aspartate 232 together coordinate Mn(2+).

The protein belongs to the arginase family. Agmatinase subfamily. The cofactor is Mn(2+).

The enzyme catalyses agmatine + H2O = urea + putrescine. It functions in the pathway amine and polyamine biosynthesis; putrescine biosynthesis via agmatine pathway; putrescine from agmatine: step 1/1. Functionally, catalyzes the formation of putrescine from agmatine. This chain is Agmatinase, found in Escherichia coli O1:K1 / APEC.